The sequence spans 297 residues: Large ribosomal subunit protein uL18 (297 aa).

The protein belongs to the universal ribosomal protein uL18 family. As to quaternary structure, component of the large ribosomal subunit (LSU).

It is found in the cytoplasm. The protein localises to the nucleus. Its function is as follows. Component of the ribosome, a large ribonucleoprotein complex responsible for the synthesis of proteins in the cell. The small ribosomal subunit (SSU) binds messenger RNAs (mRNAs) and translates the encoded message by selecting cognate aminoacyl-transfer RNA (tRNA) molecules. The large subunit (LSU) contains the ribosomal catalytic site termed the peptidyl transferase center (PTC), which catalyzes the formation of peptide bonds, thereby polymerizing the amino acids delivered by tRNAs into a polypeptide chain. The nascent polypeptides leave the ribosome through a tunnel in the LSU and interact with protein factors that function in enzymatic processing, targeting, and the membrane insertion of nascent chains at the exit of the ribosomal tunnel. This chain is Large ribosomal subunit protein uL18 (RpL5), found in Aedes aegypti (Yellowfever mosquito).